We begin with the raw amino-acid sequence, 126 residues long: Urease subunit beta (126 aa).

It belongs to the urease beta subunit family. Heterotrimer of UreA (gamma), UreB (beta) and UreC (alpha) subunits. Three heterotrimers associate to form the active enzyme.

It is found in the cytoplasm. The catalysed reaction is urea + 2 H2O + H(+) = hydrogencarbonate + 2 NH4(+). The protein operates within nitrogen metabolism; urea degradation; CO(2) and NH(3) from urea (urease route): step 1/1. This Sporosarcina pasteurii (Bacillus pasteurii) protein is Urease subunit beta.